The primary structure comprises 459 residues: Interleukin-1 receptor-associated kinase 4 (459 aa).

M1 carries the post-translational modification N-acetylmethionine. The region spanning 20 to 104 (RKLSDFIDPQ…APATLLLPDA (85 aa)) is the Death domain. K34 carries the N6-acetyllysine modification. Residues 115–161 (REAATVAQTHGPCQEKDRTSVMPMPKLEHSCEPPDSSSPDNRSVESS) form a disordered region. The Protein kinase domain occupies 186-454 (SAGGNRMGEG…PDIAKVQQLL (269 aa)). Residues 192 to 200 (MGEGGFGVV) and K213 each bind ATP. The Proton acceptor role is filled by D311. Residues 313 to 316 (KSAN) and D329 contribute to the ATP site. Residues T342 and T345 each carry the phosphothreonine modification. The residue at position 346 (S346) is a Phosphoserine.

The protein belongs to the protein kinase superfamily. TKL Ser/Thr protein kinase family. Pelle subfamily. Associates with MYD88 and IRAK2 to form a ternary complex called the Myddosome. Once phosphorylated, IRAK4 dissociates from the receptor complex and then associates with the TNF receptor-associated factor 6 (TRAF6), IRAK1, and PELI1; this intermediate complex is required for subsequent NF-kappa-B activation. Direct binding of SMAD6 to PELI1 prevents complex formation and hence negatively regulates IL1R-TLR signaling and eventually NF-kappa-B-mediated gene expression. Interacts with IL1RL1. Interacts (when phosphorylated) with IRAK1. May interact (when phosphorylated) with IRAK3. Mg(2+) serves as cofactor. Phosphorylated.

It localises to the cytoplasm. The catalysed reaction is L-seryl-[protein] + ATP = O-phospho-L-seryl-[protein] + ADP + H(+). It carries out the reaction L-threonyl-[protein] + ATP = O-phospho-L-threonyl-[protein] + ADP + H(+). Serine/threonine-protein kinase that plays a critical role in initiating innate immune response against foreign pathogens. Involved in Toll-like receptor (TLR) and IL-1R signaling pathways. Is rapidly recruited by MYD88 to the receptor-signaling complex upon TLR activation to form the Myddosome together with IRAK2. Phosphorylates initially IRAK1, thus stimulating the kinase activity and intensive autophosphorylation of IRAK1. Phosphorylates E3 ubiquitin ligases Pellino proteins (PELI1, PELI2 and PELI3) to promote pellino-mediated polyubiquitination of IRAK1. Then, the ubiquitin-binding domain of IKBKG/NEMO binds to polyubiquitinated IRAK1 bringing together the IRAK1-MAP3K7/TAK1-TRAF6 complex and the NEMO-IKKA-IKKB complex. In turn, MAP3K7/TAK1 activates IKKs (CHUK/IKKA and IKBKB/IKKB) leading to NF-kappa-B nuclear translocation and activation. Alternatively, phosphorylates TIRAP to promote its ubiquitination and subsequent degradation. Phosphorylates NCF1 and regulates NADPH oxidase activation after LPS stimulation suggesting a similar mechanism during microbial infections. The polypeptide is Interleukin-1 receptor-associated kinase 4 (Irak4) (Mus musculus (Mouse)).